Consider the following 519-residue polypeptide: ATP synthase subunit alpha 1 (519 aa).

Position 172–179 (172–179) interacts with ATP; sequence GDRQTGKT.

The protein belongs to the ATPase alpha/beta chains family. As to quaternary structure, F-type ATPases have 2 components, CF(1) - the catalytic core - and CF(0) - the membrane proton channel. CF(1) has five subunits: alpha(3), beta(3), gamma(1), delta(1), epsilon(1). CF(0) has three main subunits: a(1), b(2) and c(9-12). The alpha and beta chains form an alternating ring which encloses part of the gamma chain. CF(1) is attached to CF(0) by a central stalk formed by the gamma and epsilon chains, while a peripheral stalk is formed by the delta and b chains.

Its subcellular location is the cell inner membrane. The catalysed reaction is ATP + H2O + 4 H(+)(in) = ADP + phosphate + 5 H(+)(out). Functionally, produces ATP from ADP in the presence of a proton gradient across the membrane. The alpha chain is a regulatory subunit. This Psychromonas ingrahamii (strain DSM 17664 / CCUG 51855 / 37) protein is ATP synthase subunit alpha 1.